Consider the following 94-residue polypeptide: C-C motif chemokine 26 (94 aa).

The first 23 residues, 1–23, serve as a signal peptide directing secretion; it reads MMGLSLASAVLLASLLSLHLGTA. 2 cysteine pairs are disulfide-bonded: C33-C57 and C34-C73.

This sequence belongs to the intercrine beta (chemokine CC) family. As to quaternary structure, monomer. Ubiquitously expressed at low levels in various tissues including heart and ovary.

It localises to the secreted. In terms of biological role, chemoattractant for eosinophils and basophils. Acts as a ligand for C-C chemokine receptor CCR3 which triggers Ca(2+) mobilization in eosinophils. Also acts as a ligand for CX3C chemokine receptor CX3CR1, inducing cell chemotaxis. The sequence is that of C-C motif chemokine 26 from Homo sapiens (Human).